The chain runs to 1048 residues: Probable histidine kinase 2 (1048 aa).

Topologically, residues 1–16 (MREVEEVSKWRRRCCY) are cytoplasmic. The helical transmembrane segment at 17–37 (FWILFPLAVIATCMTITVVTF) threads the bilayer. Over 38–336 (CSSTMYMTEV…AMVGVFRRGG (299 aa)) the chain is Extracellular. A helical transmembrane segment spans residues 337 to 357 (VTMVAVACAAAAAATVACVLM). Topologically, residues 358 to 1048 (ARALRRAVAR…AVHGVCKGKN (691 aa)) are cytoplasmic. The 265-residue stretch at 398-662 (SASHDIRSAL…CFGFNVLLKT (265 aa)) folds into the Histidine kinase domain. His401 is subject to Phosphohistidine; by autocatalysis. The Response regulatory domain maps to 912 to 1044 (HVLLVEDTLV…RIVEAVHGVC (133 aa)). Asp975 carries the post-translational modification 4-aspartylphosphate.

Activation probably requires a transfer of a phosphate group between a His in the transmitter domain and an Asp of the receiver domain.

The protein resides in the cell membrane. It catalyses the reaction ATP + protein L-histidine = ADP + protein N-phospho-L-histidine.. Cytokinin receptor related to bacterial two-component regulators. Functions as a histidine kinase and transmits the stress signal to a downstream MAPK cascade. The polypeptide is Probable histidine kinase 2 (Oryza sativa subsp. indica (Rice)).